The primary structure comprises 131 residues: SPbeta prophage-derived uncharacterized protein YoqY (131 aa).

The chain is SPbeta prophage-derived uncharacterized protein YoqY (yoqY) from Bacillus subtilis (strain 168).